The sequence spans 562 residues: MDYKMHFAESLSNIFTNELTQKQILDLIESPKQDEFGDAAFPCFSLAKQYKKAPAIIAKEVAQKLSDPFFTKVEAVGPYVNVFFNRETVSDTVLKTILAEKEEYGHNHFGYEKTVVIDYSSPNIAKPFSMGHLRSTMIGNSLKHIAEKCGYEVVGINYIGDWGTQFGKLITAYKKWGNEAVVKEDPIRELFKLYVQFHEEVTDDEELEEEGRAWFKKLEEGDEEAVELWNWFRHESLKEFSRIYELLGVEFTNFQGEAFYNNLMEDFIGILEEHDLLEESEGALVVNLEEEGMPPCLIRKSDGATIYATRDLTAALYRQNTFGFDKALYVVGPEQSLHFNQFFTVLKKLGYTWVDGMEHVPFGFILKDGKKMSTRKGRIILLEEVLEEAIELAKQNIEEKNPNLKQKDEVAKQVGAGAVIFHDLKNERMHNIEFSLENMLKFEGETGPYVQYTHARACSILRKESVEFETCTFTLKDDHSWNIVKLLNKFPKVIEAACNKNEPSVISKYVLDVAQSFNKYYGNVRILDENAEKDSRLALVYAVTVVLKEGLRLLGVEAPEEM.

The short motif at 122-132 (PNIAKPFSMGH) is the 'HIGH' region element.

Belongs to the class-I aminoacyl-tRNA synthetase family. Monomer.

The protein localises to the cytoplasm. The catalysed reaction is tRNA(Arg) + L-arginine + ATP = L-arginyl-tRNA(Arg) + AMP + diphosphate. This Bacillus thuringiensis subsp. konkukian (strain 97-27) protein is Arginine--tRNA ligase 1.